A 94-amino-acid chain; its full sequence is Large ribosomal subunit protein uL24c (94 aa).

Belongs to the universal ribosomal protein uL24 family. As to quaternary structure, part of the 50S ribosomal subunit.

Its subcellular location is the plastid. The protein resides in the chloroplast. In terms of biological role, one of two assembly initiator proteins, it binds directly to the 5'-end of the 23S rRNA, where it nucleates assembly of the 50S subunit. The sequence is that of Large ribosomal subunit protein uL24c (rpl24) from Cyanidium caldarium (Red alga).